The following is a 287-amino-acid chain: Protease HtpX (287 aa).

Transmembrane regions (helical) follow at residues 4 to 24 and 33 to 53; these read IFLL…VMSI and GGLL…SLAI. Zn(2+) is bound at residue histidine 139. Glutamate 140 is a catalytic residue. Residue histidine 143 participates in Zn(2+) binding. Helical transmembrane passes span 154–174 and 195–215; these read LIQG…AGII and AVVF…VAYF. A Zn(2+)-binding site is contributed by glutamate 220.

This sequence belongs to the peptidase M48B family. It depends on Zn(2+) as a cofactor.

The protein resides in the cell inner membrane. The polypeptide is Protease HtpX (Shewanella oneidensis (strain ATCC 700550 / JCM 31522 / CIP 106686 / LMG 19005 / NCIMB 14063 / MR-1)).